A 782-amino-acid polypeptide reads, in one-letter code: Coiled-coil alpha-helical rod protein 1 (782 aa).

Composition is skewed to basic and acidic residues over residues 62–74 (ERDV…EPGR) and 208–218 (ETRRAGEAKEL). Disordered regions lie at residues 62–82 (ERDV…WGLE) and 191–218 (SSLT…AKEL). 3 coiled-coil regions span residues 82 to 314 (EGSQ…ELTR), 344 to 435 (LMVQ…VVNA), and 498 to 691 (VADV…QQEG).

It is found in the cytoplasm. The protein localises to the nucleus. Functionally, may be a regulator of keratinocyte proliferation or differentiation. This chain is Coiled-coil alpha-helical rod protein 1 (CCHCR1), found in Pongo pygmaeus (Bornean orangutan).